A 219-amino-acid polypeptide reads, in one-letter code: Ribose-5-phosphate isomerase A (219 aa).

Substrate contacts are provided by residues Thr-29–Thr-32, Asp-82–Asp-85, and Lys-95–Gly-98. Glu-104 (proton acceptor) is an active-site residue. Lys-122 is a binding site for substrate.

Belongs to the ribose 5-phosphate isomerase family. In terms of assembly, homodimer.

The catalysed reaction is aldehydo-D-ribose 5-phosphate = D-ribulose 5-phosphate. The protein operates within carbohydrate degradation; pentose phosphate pathway; D-ribose 5-phosphate from D-ribulose 5-phosphate (non-oxidative stage): step 1/1. Its function is as follows. Catalyzes the reversible conversion of ribose-5-phosphate to ribulose 5-phosphate. The protein is Ribose-5-phosphate isomerase A of Chromobacterium violaceum (strain ATCC 12472 / DSM 30191 / JCM 1249 / CCUG 213 / NBRC 12614 / NCIMB 9131 / NCTC 9757 / MK).